We begin with the raw amino-acid sequence, 250 residues long: Probable transcriptional regulatory protein Cphamn1_0542 (250 aa).

This sequence belongs to the TACO1 family.

It is found in the cytoplasm. The chain is Probable transcriptional regulatory protein Cphamn1_0542 from Chlorobium phaeobacteroides (strain BS1).